The chain runs to 539 residues: Glycerophosphoinositol inositolphosphodiesterase GDPD2 (539 aa).

Residues 1–40 are Cytoplasmic-facing; sequence MADSPGCCSIWARCLHCLYSCHWRKYPKQKMQTSKCDCIW. A helical membrane pass occupies residues 41–61; sequence FGLLFLTFLLSLGWLYIGLIL. The Extracellular portion of the chain corresponds to 62 to 83; sequence LNDLHNFNEFLFRHWGHWMDWS. Residues 84 to 104 traverse the membrane as a helical segment; it reads LIVLLVVSLLVTYASLLLLLG. The Cytoplasmic segment spans residues 105–121; that stretch reads LLLQLCGQPLHLHSLHK. Residues 122–142 traverse the membrane as a helical segment; it reads VLLLLIVLLVAAGLVGLDIQW. Over 143–154 the chain is Extracellular; it reads RQEWHSLRLSLQ. The helical transmembrane segment at 155 to 175 threads the bilayer; sequence ATAPFLHIGAVAGITLLAWPV. The Cytoplasmic segment spans residues 176–189; it reads ADTFYRIHPRGPKV. The helical transmembrane segment at 190–210 threads the bilayer; that stretch reads LLLLLFFGVTLVIYLMPLLFI. Residues 211 to 491 are Extracellular-facing; the sequence is SSPCIMKLRD…PLWLLPPQKY (281 aa). Residues 225–480 form the GP-PDE domain; that stretch reads PGLVGHRGAP…NACQLLQQMQ (256 aa). A divalent metal cation is bound by residues Glu257, Asp259, and His272. N-linked (GlcNAc...) asparagine glycosylation is present at Asn333. Residues 492–512 traverse the membrane as a helical segment; it reads LMIWVITDCASILLLLSIFLL. Residues 513-539 lie on the Cytoplasmic side of the membrane; it reads RGGCAKRNRTGLETAVLLTKINNFASE.

This sequence belongs to the glycerophosphoryl diester phosphodiesterase family. It depends on Ca(2+) as a cofactor. As to expression, detected in spleen, femur and calvaria.

It is found in the cell membrane. The protein localises to the cytoplasm. The protein resides in the cytoskeleton. It catalyses the reaction sn-glycero-3-phospho-1D-myo-inositol + H2O = 1D-myo-inositol 1-phosphate + glycerol + H(+). Its function is as follows. Has glycerophosphoinositol inositolphosphodiesterase activity and specifically hydrolyzes glycerophosphoinositol, with no activity for other substrates such as glycerophosphoinositol 4-phosphate, glycerophosphocholine, glycerophosphoethanolamine, and glycerophosphoserine. Accelerates the program of osteoblast differentiation and growth. May play a role in remodeling of the actin cytoskeleton. This chain is Glycerophosphoinositol inositolphosphodiesterase GDPD2 (Gdpd2), found in Mus musculus (Mouse).